Reading from the N-terminus, the 302-residue chain is Ribonuclease HII (302 aa).

Residues 53 to 297 (EFEIGVDEVG…VQQAIEGTLA (245 aa)) form the RNase H type-2 domain. Residues D59, E60, and D163 each contribute to the a divalent metal cation site.

Belongs to the RNase HII family. It depends on Mn(2+) as a cofactor. Mg(2+) serves as cofactor.

The protein resides in the cytoplasm. It carries out the reaction Endonucleolytic cleavage to 5'-phosphomonoester.. Functionally, endonuclease that specifically degrades the RNA of RNA-DNA hybrids. This chain is Ribonuclease HII, found in Psychrobacter sp. (strain PRwf-1).